Here is a 243-residue protein sequence, read N- to C-terminus: HTH-type transcriptional regulator MlrA (243 aa).

The 70-residue stretch at 3-72 (LYTIGEVALL…VSKVKMLLSN (70 aa)) folds into the HTH merR-type domain. A DNA-binding region (H-T-H motif) is located at residues 6–25 (IGEVALLCDINPVTLRAWQR).

In terms of assembly, interacts with DgcM and PdeR.

Activity is regulated by DgcM and PdeR. Its function is as follows. Activates transcription of csgD, the master regulator of biofilm formation, by binding to its promoter region. Also controls the transcription of cadC and ibaG. Part of a signaling cascade that regulates curli biosynthesis. The cascade is composed of two c-di-GMP control modules, in which c-di-GMP controlled by the DgcE/PdeH pair (module I) regulates the activity of the DgcM/PdeR pair (module II), which in turn regulates activity of the transcription factor MlrA. The polypeptide is HTH-type transcriptional regulator MlrA (Escherichia coli (strain K12)).